The primary structure comprises 296 residues: Ribosomal RNA small subunit methyltransferase A (296 aa).

Positions 31, 33, 58, 79, 111, and 136 each coordinate S-adenosyl-L-methionine.

It belongs to the class I-like SAM-binding methyltransferase superfamily. rRNA adenine N(6)-methyltransferase family. RsmA subfamily.

It is found in the cytoplasm. The catalysed reaction is adenosine(1518)/adenosine(1519) in 16S rRNA + 4 S-adenosyl-L-methionine = N(6)-dimethyladenosine(1518)/N(6)-dimethyladenosine(1519) in 16S rRNA + 4 S-adenosyl-L-homocysteine + 4 H(+). Specifically dimethylates two adjacent adenosines (A1518 and A1519) in the loop of a conserved hairpin near the 3'-end of 16S rRNA in the 30S particle. May play a critical role in biogenesis of 30S subunits. The chain is Ribosomal RNA small subunit methyltransferase A from Lactobacillus johnsonii (strain CNCM I-12250 / La1 / NCC 533).